We begin with the raw amino-acid sequence, 338 residues long: MKVYYDKDADLSIIKGKKVAIIGYGSQGHAHAQNLKESGVDVIVGLRKDGASWKKAEAAGHKVKEVAEAVKKADVVMILLPDESQPEVYHKDIAPNLKKGAALAFAHGFNIHYNQIVPPADVDVIMVAPKGPGHTVRSEYLKGGGVPTLIAVYQDKTGKARDVALSYAAANGGTKGGVIETNFREETETDLFGEQAVLCGGAVELVKAGFETLVEAGYAPEMAYFECLHELKLIVDLMYEGGIANMNYSISNNAEYGEYVTGPEVVTAATKEAMKKALYRIQSGEYAKMFILEGKTNYPSMTARRRLTAAHPIEKVGAELRAMMPWIAKNKLVDQSKN.

The KARI N-terminal Rossmann domain maps to 1–181 (MKVYYDKDAD…GGTKGGVIET (181 aa)). Residues 24-27 (YGSQ), Arg47, Ser52, and 82-85 (DESQ) contribute to the NADP(+) site. The active site involves His107. NADP(+) is bound at residue Gly133. Residues 182 to 327 (NFREETETDL…AELRAMMPWI (146 aa)) form the KARI C-terminal knotted domain. 4 residues coordinate Mg(2+): Asp190, Glu194, Glu226, and Glu230. Ser251 contacts substrate.

Belongs to the ketol-acid reductoisomerase family. Requires Mg(2+) as cofactor.

It catalyses the reaction (2R)-2,3-dihydroxy-3-methylbutanoate + NADP(+) = (2S)-2-acetolactate + NADPH + H(+). The catalysed reaction is (2R,3R)-2,3-dihydroxy-3-methylpentanoate + NADP(+) = (S)-2-ethyl-2-hydroxy-3-oxobutanoate + NADPH + H(+). It participates in amino-acid biosynthesis; L-isoleucine biosynthesis; L-isoleucine from 2-oxobutanoate: step 2/4. Its pathway is amino-acid biosynthesis; L-valine biosynthesis; L-valine from pyruvate: step 2/4. In terms of biological role, involved in the biosynthesis of branched-chain amino acids (BCAA). Catalyzes an alkyl-migration followed by a ketol-acid reduction of (S)-2-acetolactate (S2AL) to yield (R)-2,3-dihydroxy-isovalerate. In the isomerase reaction, S2AL is rearranged via a Mg-dependent methyl migration to produce 3-hydroxy-3-methyl-2-ketobutyrate (HMKB). In the reductase reaction, this 2-ketoacid undergoes a metal-dependent reduction by NADPH to yield (R)-2,3-dihydroxy-isovalerate. In Chromobacterium violaceum (strain ATCC 12472 / DSM 30191 / JCM 1249 / CCUG 213 / NBRC 12614 / NCIMB 9131 / NCTC 9757 / MK), this protein is Ketol-acid reductoisomerase (NADP(+)).